Consider the following 326-residue polypeptide: Protein TMED8 (326 aa).

The tract at residues 1 to 80 is disordered; sequence MSDLQAAEGP…VSPGSKDATE (80 aa). A GOLD domain is found at 160–324; that stretch reads PPCIWTFAKV…NKTLYFHIYY (165 aa). Lys170 is modified (N6-acetyllysine). Positions 238–268 are disordered; the sequence is DSCDDEDEEEEEEEEIEEPVPAGDVERGSRS. Acidic residues predominate over residues 239 to 255; the sequence is SCDDEDEEEEEEEEIEE.

This Pongo abelii (Sumatran orangutan) protein is Protein TMED8 (TMED8).